The following is a 329-amino-acid chain: Olfactory receptor 10J3 (329 aa).

Residues 1-26 lie on the Extracellular side of the membrane; sequence MPKLNSTFVTEFLFEGFSSFRRQHKL. Asn5 carries N-linked (GlcNAc...) asparagine glycosylation. Residues 27–47 traverse the membrane as a helical segment; sequence VFFVVFLTLYLLTLSGNVIIM. Residues 48–55 are Cytoplasmic-facing; the sequence is TIIRLDHH. The chain crosses the membrane as a helical span at residues 56–76; it reads LHTPMYFFLCMLSISETCYTV. The Extracellular portion of the chain corresponds to 77–100; sequence AIIPHMLSGLLNPHQPIATQSCAT. Cys98 and Cys190 are joined by a disulfide. The helical transmembrane segment at 101–121 threads the bilayer; that stretch reads QLFFYLTFGINNCFLLTVMGY. Topologically, residues 122–140 are cytoplasmic; the sequence is DRYVAICNPLRYSVIMGKR. The chain crosses the membrane as a helical span at residues 141 to 161; the sequence is ACIQLASGSLGIGLGMAIVQV. Residues 162–198 lie on the Extracellular side of the membrane; that stretch reads TSVFGLPFCDAFVISHFFCDVRHLLKLACTDTTVNEI. Residues 199–218 form a helical membrane-spanning segment; the sequence is INFVVSVCVLVLPMGLVFIS. Topologically, residues 219–238 are cytoplasmic; sequence YVLIISTILKIASAEGQKKA. Residues 239–259 form a helical membrane-spanning segment; that stretch reads FATCASHLTVVIIHYGCASII. At 260–272 the chain is on the extracellular side; the sequence is YLKPKSQSSLGQD. Residues 273–293 traverse the membrane as a helical segment; the sequence is RLISVTYTHHSPTEPCCVQPE. At 294-329 the chain is on the cytoplasmic side; the sequence is EQGGQRCSAQSRGAKNSVSLMKRGCEGFSFAFINMY.

It belongs to the G-protein coupled receptor 1 family.

Its subcellular location is the cell membrane. Odorant receptor. This is Olfactory receptor 10J3 (OR10J3) from Homo sapiens (Human).